The chain runs to 188 residues: CASP-like protein 4B1 (188 aa).

Residues Met-1 to Ile-34 are disordered. The Cytoplasmic segment spans residues Met-1 to Lys-46. The segment covering Glu-24–Ile-34 has biased composition (polar residues). Residues Ala-47–Val-67 form a helical membrane-spanning segment. The Extracellular portion of the chain corresponds to Ser-68–Arg-84. A helical transmembrane segment spans residues Tyr-85–Phe-105. Residues Ser-106–Asp-124 are Cytoplasmic-facing. Residues Gln-125–Phe-145 traverse the membrane as a helical segment. Topologically, residues Arg-146–Ser-156 are extracellular. A helical transmembrane segment spans residues Ala-157–Phe-177. The Cytoplasmic portion of the chain corresponds to Ser-178–Ile-188.

Belongs to the Casparian strip membrane proteins (CASP) family. Homodimer and heterodimers.

It localises to the cell membrane. This Arabidopsis thaliana (Mouse-ear cress) protein is CASP-like protein 4B1.